The following is a 514-amino-acid chain: 3-octaprenyl-4-hydroxybenzoate carboxy-lyase (514 aa).

Asn-177 is a Mn(2+) binding site. Prenylated FMN is bound by residues Ile-180–Arg-182, Arg-194–Leu-196, and Arg-199–Gly-200. Position 243 (Glu-243) interacts with Mn(2+). Residue Asp-314 is the Proton donor of the active site.

This sequence belongs to the UbiD family. As to quaternary structure, homohexamer. Prenylated FMN is required as a cofactor. It depends on Mn(2+) as a cofactor.

It localises to the cell membrane. The enzyme catalyses a 4-hydroxy-3-(all-trans-polyprenyl)benzoate + H(+) = a 2-(all-trans-polyprenyl)phenol + CO2. It functions in the pathway cofactor biosynthesis; ubiquinone biosynthesis. Its function is as follows. Catalyzes the decarboxylation of 3-octaprenyl-4-hydroxy benzoate to 2-octaprenylphenol, an intermediate step in ubiquinone biosynthesis. The polypeptide is 3-octaprenyl-4-hydroxybenzoate carboxy-lyase (Bordetella pertussis (strain Tohama I / ATCC BAA-589 / NCTC 13251)).